A 659-amino-acid polypeptide reads, in one-letter code: Exoribonuclease 2 (659 aa).

In terms of domain architecture, RNB spans 189–531 (RENLTALHFV…NHRLIKAVLA (343 aa)). The S1 motif domain maps to 576 to 658 (NAEFEAEVQD…ATRSIVGEIL (83 aa)).

The protein belongs to the RNR ribonuclease family. RNase II subfamily.

The protein resides in the cytoplasm. The enzyme catalyses Exonucleolytic cleavage in the 3'- to 5'-direction to yield nucleoside 5'-phosphates.. Involved in mRNA degradation. Hydrolyzes single-stranded polyribonucleotides processively in the 3' to 5' direction. This Haemophilus influenzae (strain PittGG) protein is Exoribonuclease 2.